The sequence spans 207 residues: LexA repressor (207 aa).

A DNA-binding region (H-T-H motif) is located at residues 28–48; it reads VREIAVAVGLASSSTVHGHLE. Active-site for autocatalytic cleavage activity residues include serine 129 and lysine 167.

The protein belongs to the peptidase S24 family. In terms of assembly, homodimer.

It carries out the reaction Hydrolysis of Ala-|-Gly bond in repressor LexA.. In terms of biological role, represses a number of genes involved in the response to DNA damage (SOS response), including recA and lexA. In the presence of single-stranded DNA, RecA interacts with LexA causing an autocatalytic cleavage which disrupts the DNA-binding part of LexA, leading to derepression of the SOS regulon and eventually DNA repair. This chain is LexA repressor, found in Oceanobacillus iheyensis (strain DSM 14371 / CIP 107618 / JCM 11309 / KCTC 3954 / HTE831).